The primary structure comprises 319 residues: ATP-dependent 6-phosphofructokinase (319 aa).

G11 contacts ATP. 21–25 (RAVVR) provides a ligand contact to ADP. Residues 72–73 (RC) and 102–105 (GDGS) each bind ATP. Mg(2+) is bound at residue D103. 125–127 (TID) is a binding site for substrate. The Proton acceptor role is filled by D127. R154 lines the ADP pocket. Residues R162 and 169 to 171 (MGR) each bind substrate. Residues 185-187 (GAE), R211, and 213-215 (KKH) contribute to the ADP site. Residues E222, R243, and 249–252 (HIQR) contribute to the substrate site.

It belongs to the phosphofructokinase type A (PFKA) family. ATP-dependent PFK group I subfamily. Prokaryotic clade 'B1' sub-subfamily. In terms of assembly, homotetramer. Requires Mg(2+) as cofactor.

The protein resides in the cytoplasm. The enzyme catalyses beta-D-fructose 6-phosphate + ATP = beta-D-fructose 1,6-bisphosphate + ADP + H(+). It functions in the pathway carbohydrate degradation; glycolysis; D-glyceraldehyde 3-phosphate and glycerone phosphate from D-glucose: step 3/4. Allosterically activated by ADP and other diphosphonucleosides, and allosterically inhibited by phosphoenolpyruvate. Catalyzes the phosphorylation of D-fructose 6-phosphate to fructose 1,6-bisphosphate by ATP, the first committing step of glycolysis. In Bacillus licheniformis (strain ATCC 14580 / DSM 13 / JCM 2505 / CCUG 7422 / NBRC 12200 / NCIMB 9375 / NCTC 10341 / NRRL NRS-1264 / Gibson 46), this protein is ATP-dependent 6-phosphofructokinase.